A 547-amino-acid polypeptide reads, in one-letter code: Chaperonin GroEL (547 aa).

Residues 30-33 (TLGP), Lys51, 87-91 (DGTTT), Gly415, 479-481 (NAA), and Asp495 each bind ATP.

It belongs to the chaperonin (HSP60) family. As to quaternary structure, forms a cylinder of 14 subunits composed of two heptameric rings stacked back-to-back. Interacts with the co-chaperonin GroES.

It localises to the cytoplasm. It catalyses the reaction ATP + H2O + a folded polypeptide = ADP + phosphate + an unfolded polypeptide.. Its function is as follows. Together with its co-chaperonin GroES, plays an essential role in assisting protein folding. The GroEL-GroES system forms a nano-cage that allows encapsulation of the non-native substrate proteins and provides a physical environment optimized to promote and accelerate protein folding. This is Chaperonin GroEL from Enterobacter sp. (strain 638).